We begin with the raw amino-acid sequence, 84 residues long: uncharacterized protein (84 aa).

Over residues 1-14 (MQKLNKSSSKGKNN) the composition is skewed to low complexity. The tract at residues 1–84 (MQKLNKSSSK…VDKGERKESE (84 aa)) is disordered. Residues 28–40 (STYGFGPYGGGGF) show a composition bias toward gly residues. 2 stretches are compositionally biased toward basic and acidic residues: residues 53 to 65 (DTKKLKGEVEEGT) and 73 to 84 (KLVDKGERKESE).

This is an uncharacterized protein from Schizosaccharomyces pombe (strain 972 / ATCC 24843) (Fission yeast).